Consider the following 560-residue polypeptide: Clathrin interactor EPSIN 1 (560 aa).

In terms of domain architecture, ENTH spans 20–152 (LKVLKVPEME…NNKEKISEIR (133 aa)). Residues 190 to 288 (NFDSYKDRDS…KPSTGSANQV (99 aa)) form a disordered region. Positions 193–220 (SYKDRDSREDKNDYESFQKSRRGVKTEE) are enriched in basic and acidic residues. Residues 221–233 (QSYTSKKSFSRYG) show a composition bias toward polar residues. The segment covering 234-251 (STDHDNLSSGKKSPDSAK) has biased composition (basic and acidic residues). Polar residues predominate over residues 274–287 (GTSSNKPSTGSANQ). The Clathrin binding motif lies at 296–300 (IGDFL). The short motif at 320–322 (DLF) is the ALPHA-ADR binding element. Residues 414-439 (SHSASVSTGPQAPSVHGSATNTTSPL) are compositionally biased toward polar residues. Disordered stretches follow at residues 414–453 (SHSA…QKKD) and 517–560 (LGKT…GFKQ). Over residues 526–536 (QQQQQQQQQQQ) the composition is skewed to low complexity. A compositionally biased stretch (polar residues) spans 544 to 554 (FFSSLSNQRYQ).

The protein belongs to the epsin family. Interacts with clathrin, VTI11, GAMMA-ADR and VSR1. Binds to the deubiquitinating enzyme AMSH3. In terms of tissue distribution, mostly expressed in cotyledons and flowers, and, to a lower extent, in roots, leaves and siliques (at protein level).

It localises to the golgi apparatus. The protein resides in the prevacuolar compartment. Its subcellular location is the cytoplasm. The protein localises to the cytoplasmic vesicle. It is found in the clathrin-coated vesicle. It localises to the cytoskeleton. Functionally, may have a role in transport via clathrin-coated vesicles from the trans-Golgi network to endosomes. Stimulates clathrin assembly. Does not seem to bind to phospholipids. Plays an important role in the vacuolar trafficking of soluble cargo proteins at the trans-Golgi network. The sequence is that of Clathrin interactor EPSIN 1 (EPSIN1) from Arabidopsis thaliana (Mouse-ear cress).